The following is a 250-amino-acid chain: uncharacterized protein (250 aa).

The helical transmembrane segment at 4–24 (FKYLLFLVVFAVFFLTFAFFD) threads the bilayer.

It is found in the membrane. This is an uncharacterized protein from Methanocaldococcus jannaschii (strain ATCC 43067 / DSM 2661 / JAL-1 / JCM 10045 / NBRC 100440) (Methanococcus jannaschii).